A 123-amino-acid chain; its full sequence is Phospholipase A2 (123 aa).

7 disulfides stabilise this stretch: C11-C77, C27-C123, C29-C45, C44-C105, C51-C98, C61-C91, and C84-C96. Ca(2+)-binding residues include Y28, G30, and G32. H48 is an active-site residue. D49 contacts Ca(2+). D99 is a catalytic residue.

Belongs to the phospholipase A2 family. Monomer or homodimer. Ca(2+) serves as cofactor. Activated by trypsin cleavage in the duodenum. Can also be activated by thrombin or autocatalytically.

The protein resides in the secreted. The catalysed reaction is a 1,2-diacyl-sn-glycero-3-phosphocholine + H2O = a 1-acyl-sn-glycero-3-phosphocholine + a fatty acid + H(+). It catalyses the reaction 1,2-ditetradecanoyl-sn-glycero-3-phosphocholine + H2O = 1-tetradecanoyl-sn-glycero-3-phosphocholine + tetradecanoate + H(+). The enzyme catalyses 1,2-dihexadecanoyl-sn-glycero-3-phosphocholine + H2O = 1-hexadecanoyl-sn-glycero-3-phosphocholine + hexadecanoate + H(+). It carries out the reaction 1-hexadecanoyl-2-(9Z-octadecenoyl)-sn-glycero-3-phosphocholine + H2O = 1-hexadecanoyl-sn-glycero-3-phosphocholine + (9Z)-octadecenoate + H(+). The catalysed reaction is 1-hexadecanoyl-2-(5Z,8Z,11Z,14Z-eicosatetraenoyl)-sn-glycero-3-phosphocholine + H2O = 1-hexadecanoyl-sn-glycero-3-phosphocholine + (5Z,8Z,11Z,14Z)-eicosatetraenoate + H(+). It catalyses the reaction 1-hexadecanoyl-2-(9Z-octadecenoyl)-sn-glycero-3-phospho-(1'-sn-glycerol) + H2O = 1-hexadecanoyl-sn-glycero-3-phospho-(1'-sn-glycerol) + (9Z)-octadecenoate + H(+). The enzyme catalyses N-hexadecanoyl-1,2-di-(9Z-octadecenoyl)-sn-glycero-3-phosphoethanolamine + H2O = N-hexadecanoyl-1-(9Z-octadecenoyl)-sn-glycero-3-phosphoethanolamine + (9Z)-octadecenoate + H(+). It carries out the reaction 1-hexadecanoyl-2-(9Z,12Z-octadecadienoyl)-sn-glycero-3-phosphoethanolamine + H2O = 1-hexadecanoyl-sn-glycero-3-phosphoethanolamine + (9Z,12Z)-octadecadienoate + H(+). The catalysed reaction is N,1-dihexadecanoyl-2-(9Z,12Z-octadecadienoyl)-sn-glycero-3-phosphoethanolamine + H2O = N,1-dihexadecanoyl-sn-glycero-3-phosphoethanolamine + (9Z,12Z)-octadecadienoate + H(+). Functionally, secretory calcium-dependent phospholipase A2 that primarily targets dietary phospholipids in the intestinal tract. Hydrolyzes the ester bond of the fatty acyl group attached at sn-2 position of phospholipids (phospholipase A2 activity) with preference for phosphatidylethanolamines and phosphatidylglycerols over phosphatidylcholines. May play a role in the biosynthesis of N-acyl ethanolamines that regulate energy metabolism and inflammation in the intestinal tract. Hydrolyzes N-acyl phosphatidylethanolamines to N-acyl lysophosphatidylethanolamines, which are further cleaved by a lysophospholipase D to release N-acyl ethanolamines. May act in an autocrine and paracrine manner. Has anti-helminth activity in a process regulated by gut microbiota. Upon helminth infection of intestinal epithelia, directly affects phosphatidylethanolamine contents in the membrane of helminth larvae, likely controlling an array of phospholipid-mediated cellular processes such as membrane fusion and cell division while providing for better immune recognition, ultimately reducing larvae integrity and infectivity. This is Phospholipase A2 (PLA2G1B) from Ovis aries (Sheep).